Reading from the N-terminus, the 42-residue chain is Photosystem II reaction center protein J (42 aa).

A helical transmembrane segment spans residues 10–30 (IPLWLIGTVVGSLAIGLLAIF).

The protein belongs to the PsbJ family. In terms of assembly, PSII is composed of 1 copy each of membrane proteins PsbA, PsbB, PsbC, PsbD, PsbE, PsbF, PsbH, PsbI, PsbJ, PsbK, PsbL, PsbM, PsbT, PsbX, PsbY, PsbZ, Psb30/Ycf12, at least 3 peripheral proteins of the oxygen-evolving complex and a large number of cofactors. It forms dimeric complexes.

The protein resides in the plastid. It localises to the chloroplast thylakoid membrane. Functionally, one of the components of the core complex of photosystem II (PSII). PSII is a light-driven water:plastoquinone oxidoreductase that uses light energy to abstract electrons from H(2)O, generating O(2) and a proton gradient subsequently used for ATP formation. It consists of a core antenna complex that captures photons, and an electron transfer chain that converts photonic excitation into a charge separation. In Stigeoclonium helveticum (Green alga), this protein is Photosystem II reaction center protein J.